Here is a 283-residue protein sequence, read N- to C-terminus: Pantothenate synthetase (283 aa).

30 to 37 provides a ligand contact to ATP; the sequence is MGYYHAGH. The active-site Proton donor is His-37. Gln-61 contacts (R)-pantoate. Residue Gln-61 coordinates beta-alanine. 147–150 lines the ATP pocket; sequence GQKD. Gln-153 serves as a coordination point for (R)-pantoate. Residues Val-176 and 184–187 each bind ATP; that span reads MSSR.

The protein belongs to the pantothenate synthetase family. In terms of assembly, homodimer.

It is found in the cytoplasm. The catalysed reaction is (R)-pantoate + beta-alanine + ATP = (R)-pantothenate + AMP + diphosphate + H(+). It participates in cofactor biosynthesis; (R)-pantothenate biosynthesis; (R)-pantothenate from (R)-pantoate and beta-alanine: step 1/1. In terms of biological role, catalyzes the condensation of pantoate with beta-alanine in an ATP-dependent reaction via a pantoyl-adenylate intermediate. The protein is Pantothenate synthetase of Nitratidesulfovibrio vulgaris (strain ATCC 29579 / DSM 644 / CCUG 34227 / NCIMB 8303 / VKM B-1760 / Hildenborough) (Desulfovibrio vulgaris).